Here is a 220-residue protein sequence, read N- to C-terminus: Thiopurine S-methyltransferase (220 aa).

Residues Trp10, Leu45, Glu66, and Arg123 each contribute to the S-adenosyl-L-methionine site.

Belongs to the class I-like SAM-binding methyltransferase superfamily. TPMT family.

It is found in the cytoplasm. The catalysed reaction is S-adenosyl-L-methionine + a thiopurine = S-adenosyl-L-homocysteine + a thiopurine S-methylether.. In Pseudomonas syringae pv. syringae (strain B728a), this protein is Thiopurine S-methyltransferase.